Reading from the N-terminus, the 166-residue chain is 2S seed storage protein 4 (166 aa).

The N-terminal stretch at 1–21 (MANKLFLVCAALALCFILTNA) is a signal peptide. 2 propeptides span residues 22–37 (SVYRTVVEFDEDDASN) and 73–88 (GPSLDDEFDMEDDIEN).

Belongs to the 2S seed storage albumins family. As to quaternary structure, the mature protein consists of a small and a large chain linked by disulfide bonds.

This is a 2S seed storage protein. The polypeptide is 2S seed storage protein 4 (AT2S4) (Arabidopsis thaliana (Mouse-ear cress)).